The chain runs to 449 residues: MTKPIVAIVGRPNVGKSTFFNRLIGERRAIVEDLPGTTRDRLYGDTFWNGREFTVVDTAGVLFGGEDPNLPEAEIARRTRAQAEHAIAEADAIIFIVDGRDGLTAADSDVADVLRTTSKPVVLAVNKCDSQERMLDAVEFYALNLGEPIPMSAFHGLGTGDVLDRLTEYLPPKTFTQEEERHLRIAIVGRPNVGKSSLLNRLLGQERSVVSSIPGTTRDPIDTTITYHGEPITLIDTAGIRRAGKIERGIEKYSVLRTLRAIERCDVALLLIDATEGVTAQDTHIAGMVVEAKKGLILVVNKWDAIEKDSHTYYAFQDQVREAFKFVDYAPIVFVSALTGQRVSHLLDYAREVYVQRQKRVPTSELNNFLREVMLQQPPMAVKKGAHLRLYYAVQPQTEPPVFLFFANDGELVHWSYARYLENRLRERYGFQGTPIVIVFRSRERKEER.

EngA-type G domains lie at 4-174 (PIVA…PPKT) and 183-358 (LRIA…VQRQ). GTP-binding positions include 10–17 (GRPNVGKS), 57–61 (DTAGV), 126–129 (NKCD), 189–196 (GRPNVGKS), 236–240 (DTAGI), and 301–304 (NKWD). The region spanning 359-444 (KRVPTSELNN…PIVIVFRSRE (86 aa)) is the KH-like domain.

The protein belongs to the TRAFAC class TrmE-Era-EngA-EngB-Septin-like GTPase superfamily. EngA (Der) GTPase family. In terms of assembly, associates with the 50S ribosomal subunit.

In terms of biological role, GTPase that plays an essential role in the late steps of ribosome biogenesis. This Chloroflexus aurantiacus (strain ATCC 29366 / DSM 635 / J-10-fl) protein is GTPase Der.